The primary structure comprises 496 residues: Glycylpeptide N-tetradecanoyltransferase 1 (496 aa).

The interval 1-82 (MADESETAVK…SAQDQPVKMN (82 aa)) is disordered. Phosphoserine is present on residues Ser31 and Ser47. A compositionally biased stretch (basic residues) spans 55 to 66 (KKKKKKQKKKKE). At Ser83 the chain carries Phosphoserine. 11 residues coordinate tetradecanoyl-CoA: Gln118, Phe119, Trp120, Phe247, Leu248, Cys249, Val250, Ser256, Arg258, Val259, and Ala260.

This sequence belongs to the NMT family.

The protein localises to the cytoplasm. It localises to the cytosol. Its subcellular location is the membrane. It catalyses the reaction N-terminal glycyl-[protein] + tetradecanoyl-CoA = N-tetradecanoylglycyl-[protein] + CoA + H(+). The catalysed reaction is N-terminal glycyl-L-lysyl-[protein] + tetradecanoyl-CoA = N-terminal glycyl-(N(6)-tetradecanoyl)-L-lysyl-[protein] + CoA + H(+). Its function is as follows. Adds a myristoyl group to the N-terminal glycine residue of certain cellular and viral proteins. Also able to mediate N-terminal lysine myristoylation of proteins: catalyzes myristoylation of ARF6 on both 'Gly-2' and 'Lys-3'. Lysine myristoylation is required to maintain ARF6 on membranes during the GTPase cycle. The polypeptide is Glycylpeptide N-tetradecanoyltransferase 1 (NMT1) (Pongo abelii (Sumatran orangutan)).